A 151-amino-acid chain; its full sequence is UPF0251 protein Ctha_0452 (151 aa).

The protein belongs to the UPF0251 family.

This is UPF0251 protein Ctha_0452 from Chloroherpeton thalassium (strain ATCC 35110 / GB-78).